The chain runs to 104 residues: Large ribosomal subunit protein uL24 (104 aa).

The protein belongs to the universal ribosomal protein uL24 family. As to quaternary structure, part of the 50S ribosomal subunit.

Its function is as follows. One of two assembly initiator proteins, it binds directly to the 5'-end of the 23S rRNA, where it nucleates assembly of the 50S subunit. In terms of biological role, one of the proteins that surrounds the polypeptide exit tunnel on the outside of the subunit. This chain is Large ribosomal subunit protein uL24, found in Escherichia coli O81 (strain ED1a).